Here is an 86-residue protein sequence, read N- to C-terminus: Co-chaperonin GroES (86 aa).

The protein belongs to the GroES chaperonin family. As to quaternary structure, heptamer of 7 subunits arranged in a ring. Interacts with the chaperonin GroEL.

The protein localises to the cytoplasm. Together with the chaperonin GroEL, plays an essential role in assisting protein folding. The GroEL-GroES system forms a nano-cage that allows encapsulation of the non-native substrate proteins and provides a physical environment optimized to promote and accelerate protein folding. GroES binds to the apical surface of the GroEL ring, thereby capping the opening of the GroEL channel. The sequence is that of Co-chaperonin GroES from Sulfurovum sp. (strain NBC37-1).